The sequence spans 286 residues: Ribosomal RNA small subunit methyltransferase A (286 aa).

S-adenosyl-L-methionine contacts are provided by asparagine 31, isoleucine 33, glycine 58, glutamate 80, aspartate 106, and asparagine 125.

This sequence belongs to the class I-like SAM-binding methyltransferase superfamily. rRNA adenine N(6)-methyltransferase family. RsmA subfamily.

Its subcellular location is the cytoplasm. It catalyses the reaction adenosine(1518)/adenosine(1519) in 16S rRNA + 4 S-adenosyl-L-methionine = N(6)-dimethyladenosine(1518)/N(6)-dimethyladenosine(1519) in 16S rRNA + 4 S-adenosyl-L-homocysteine + 4 H(+). Its function is as follows. Specifically dimethylates two adjacent adenosines (A1518 and A1519) in the loop of a conserved hairpin near the 3'-end of 16S rRNA in the 30S particle. May play a critical role in biogenesis of 30S subunits. This Wolbachia pipientis wMel protein is Ribosomal RNA small subunit methyltransferase A.